We begin with the raw amino-acid sequence, 276 residues long: Type II pantothenate kinase (276 aa).

ATP is bound at residue 8–15; the sequence is DAGGTLTK. E76 functions as the Proton acceptor in the catalytic mechanism. Residues T105, 127–131, F143, and S230 contribute to the ATP site; that span reads GGTIM.

It belongs to the type II pantothenate kinase family. In terms of assembly, homodimer.

The protein localises to the cytoplasm. The enzyme catalyses (R)-pantothenate + ATP = (R)-4'-phosphopantothenate + ADP + H(+). It functions in the pathway cofactor biosynthesis; coenzyme A biosynthesis; CoA from (R)-pantothenate: step 1/5. Catalyzes the phosphorylation of pantothenate (Pan), the first step in CoA biosynthesis. The sequence is that of Type II pantothenate kinase from Bacillus anthracis.